The primary structure comprises 278 residues: Biotin synthase (278 aa).

Positions 1–227 (MQIMLCAISN…QSVVMVAGGR (227 aa)) constitute a Radical SAM core domain. The [4Fe-4S] cluster site is built by cysteine 16, cysteine 20, and cysteine 23. 3 residues coordinate [2Fe-2S] cluster: cysteine 60, cysteine 95, and cysteine 153.

The protein belongs to the radical SAM superfamily. Biotin synthase family. Homodimer. The cofactor is [4Fe-4S] cluster. It depends on [2Fe-2S] cluster as a cofactor.

It catalyses the reaction (4R,5S)-dethiobiotin + (sulfur carrier)-SH + 2 reduced [2Fe-2S]-[ferredoxin] + 2 S-adenosyl-L-methionine = (sulfur carrier)-H + biotin + 2 5'-deoxyadenosine + 2 L-methionine + 2 oxidized [2Fe-2S]-[ferredoxin]. It participates in cofactor biosynthesis; biotin biosynthesis; biotin from 7,8-diaminononanoate: step 2/2. Functionally, catalyzes the conversion of dethiobiotin (DTB) to biotin by the insertion of a sulfur atom into dethiobiotin via a radical-based mechanism. This is Biotin synthase from Campylobacter jejuni (strain RM1221).